The sequence spans 250 residues: tRNA (guanine-N(1)-)-methyltransferase (250 aa).

S-adenosyl-L-methionine is bound by residues glycine 116 and 136–141 (IGDYVL).

This sequence belongs to the RNA methyltransferase TrmD family. As to quaternary structure, homodimer.

It is found in the cytoplasm. The catalysed reaction is guanosine(37) in tRNA + S-adenosyl-L-methionine = N(1)-methylguanosine(37) in tRNA + S-adenosyl-L-homocysteine + H(+). Its function is as follows. Specifically methylates guanosine-37 in various tRNAs. The polypeptide is tRNA (guanine-N(1)-)-methyltransferase (Pseudomonas putida (strain ATCC 700007 / DSM 6899 / JCM 31910 / BCRC 17059 / LMG 24140 / F1)).